Reading from the N-terminus, the 210-residue chain is Large ribosomal subunit protein uL5 (210 aa).

Residues 188 to 210 are disordered; sequence AKDDPKKAKTKRGPAYYAKKKKK. Residues 195–210 show a composition bias toward basic residues; sequence AKTKRGPAYYAKKKKK.

The protein belongs to the universal ribosomal protein uL5 family. Part of the 50S ribosomal subunit; part of the 5S rRNA/L5/L18/L25 subcomplex. Contacts the 5S rRNA and the P site tRNA. Forms a bridge to the 30S subunit in the 70S ribosome.

In terms of biological role, this is one of the proteins that bind and probably mediate the attachment of the 5S RNA into the large ribosomal subunit, where it forms part of the central protuberance. In the 70S ribosome it contacts protein S13 of the 30S subunit (bridge B1b), connecting the 2 subunits; this bridge is implicated in subunit movement. Contacts the P site tRNA; the 5S rRNA and some of its associated proteins might help stabilize positioning of ribosome-bound tRNAs. This Cutibacterium acnes (strain DSM 16379 / KPA171202) (Propionibacterium acnes) protein is Large ribosomal subunit protein uL5.